Reading from the N-terminus, the 149-residue chain is Arginine repressor (149 aa).

Belongs to the ArgR family.

It is found in the cytoplasm. Its pathway is amino-acid biosynthesis; L-arginine biosynthesis [regulation]. Functionally, regulates arginine biosynthesis genes. This is Arginine repressor from Alkaliphilus oremlandii (strain OhILAs) (Clostridium oremlandii (strain OhILAs)).